Consider the following 335-residue polypeptide: MWWPMLWAFPVLLCLCSSQALGQESGACPDVKIVGLGAQDKVAVIQSCPSFPGPPGPKGEPGSPAGRGERGLQGSPGKMGPPGSKGEPGTMGPPGVKGEKGERGTASPLGQKELGDALCRRGPRSCKDLLTRGIFLTGWYTIYLPDCRPLTVLCDMDVDGGGWTVFQRRVDGSINFYRDWDSYKRGFGNLGTEFWLGNDYLHLLTANGNQELRVDLREFQGQTSFAKYSSFQVSGEQEKYKLTLGQFLEGTAGDSLTKHNNMAFSTHDQDNDTNGGKNCAALFHGAWWYHDCHQSNLNGRYLPGSHESYADGINWLSGRGHRYSYKVAEMKIRAS.

Positions 1–17 (MWWPMLWAFPVLLCLCS) are cleaved as a signal peptide. Residues 47 to 114 (SCPSFPGPPG…TASPLGQKEL (68 aa)) are disordered. Residues 50 to 88 (SFPGPPGPKGEPGSPAGRGERGLQGSPGKMGPPGSKGEP) enclose the Collagen-like domain. The segment covering 75–88 (SPGKMGPPGSKGEP) has biased composition (low complexity). A Fibrinogen C-terminal domain is found at 117–335 (ALCRRGPRSC…KVAEMKIRAS (219 aa)). Intrachain disulfides connect cysteine 119/cysteine 147 and cysteine 126/cysteine 154. An a domain; contributes to trimerization region spans residues 123-162 (PRSCKDLLTRGIFLTGWYTIYLPDCRPLTVLCDMDVDGGG). The segment at 163–251 (WTVFQRRVDG…LTLGQFLEGT (89 aa)) is b domain; contributes to trimerization. Residue aspartate 270 coordinates Ca(2+). Asparagine 271 carries N-linked (GlcNAc...) asparagine glycosylation. Aspartate 272 is a binding site for Ca(2+). Cysteines 279 and 292 form a disulfide. Residue 291–293 (DCH) coordinates a carbohydrate. Positions 326–335 (KVAEMKIRAS) are p domain.

Belongs to the ficolin lectin family. In terms of assembly, homotrimer. Interacts with elastin/ELN. Interacts (via Fibrinogen C-terminal domain) with FFAR2. Interacts with CRP; may regulate monocyte activation by FCN1.

Its subcellular location is the secreted. It localises to the cell membrane. Extracellular lectin functioning as a pattern-recognition receptor in innate immunity. Binds the sugar moieties of pathogen-associated molecular patterns (PAMPs) displayed on microbes and activates the lectin pathway of the complement system. May also activate monocytes through a G protein-coupled receptor, FFAR2, inducing the secretion of interleukin-8/IL-8. Binds preferentially to 9-O-acetylated 2-6-linked sialic acid derivatives and to various glycans containing sialic acid engaged in a 2-3 linkage. In Rattus norvegicus (Rat), this protein is Ficolin-1 (Fcn1).